Here is a 535-residue protein sequence, read N- to C-terminus: Protein translocase subunit SecD (535 aa).

6 consecutive transmembrane segments (helical) span residues 5-25 (LTWKVVVIVAVLLVFAFGIIG), 377-397 (AIIGFVAVIIFMLIYYKGAGI), 402-421 (SLLLNLVILLGFMGYFGAVL), 425-444 (GIAGVILTVGMGVDSNVLIF), 469-489 (WLTIIDTHVTTIVSAIILFLF), and 496-516 (GFAVTLSFGLFANLFTAVFVS).

This sequence belongs to the SecD/SecF family. SecD subfamily. In terms of assembly, forms a complex with SecF. Part of the essential Sec protein translocation apparatus which comprises SecA, SecYEG and auxiliary proteins SecDF. Other proteins may also be involved.

It localises to the cell inner membrane. In terms of biological role, part of the Sec protein translocase complex. Interacts with the SecYEG preprotein conducting channel. SecDF uses the proton motive force (PMF) to complete protein translocation after the ATP-dependent function of SecA. This Koribacter versatilis (strain Ellin345) protein is Protein translocase subunit SecD.